Here is a 458-residue protein sequence, read N- to C-terminus: Pentatricopeptide repeat-containing protein At1g77405 (458 aa).

PPR repeat units lie at residues 164–198 (TTAS…HCKP), 199–233 (DVYA…GFRY), 236–271 (DTYT…NRMF), 282–316 (DVVT…GCVP), 317–351 (NQVT…GHGV), 353–387 (GSST…GLVP), and 388–419 (REYT…MREG).

This sequence belongs to the PPR family. P subfamily.

The polypeptide is Pentatricopeptide repeat-containing protein At1g77405 (Arabidopsis thaliana (Mouse-ear cress)).